We begin with the raw amino-acid sequence, 438 residues long: (3,5-dihydroxyphenyl)acetyl-CoA 1,2-dioxygenase (438 aa).

Substrate contacts are provided by residues Asp183, Glu189, 222-225 (HPRY), 233-238 (AGINLK), Gly296, 325-327 (IPG), and Gln416.

This sequence belongs to the enoyl-CoA hydratase/isomerase family. As to quaternary structure, homohexamer; dimer of trimers.

The enzyme catalyses (3,5-dihydroxyphenyl)acetyl-CoA + O2 = 2-(3,5-dihydroxyphenyl)-2-oxoacetate + CoA + H(+). Its activity is regulated as follows. Inhibited by DPA-S-(N-acetylcysteamine). Functionally, involved in the biosynthesis of the nonproteinogenic amino acid monomer (S)-3,5-dihydroxyphenylglycine (Dpg) responsible of the production of vancomycin and teicoplanin antibiotics. Catalyzes the unusual conversion 3,5-dihydroxyphenylacetyl-CoA (DPA-CoA) to 3,5-dihydroxyphenylglyoxylate. DpgC performed a net four-electron oxidation of the benzylic carbon of DPA-CoA and the hydrolysis of the thioester bond to generate free CoA. DpgC has the ability to process a diverse range of substituted phenylacetyl-CoA substrates. This Streptomyces toyocaensis protein is (3,5-dihydroxyphenyl)acetyl-CoA 1,2-dioxygenase.